A 358-amino-acid chain; its full sequence is Nuclear receptor subfamily 1 group I member 3 (358 aa).

Residues 18–93 (PRNCVVCGDR…VGMRKDMILS (76 aa)) constitute a DNA-binding region (nuclear receptor). The NR C4-type zinc-finger motif lies at 21-41 (CVVCGDRATGYHFHALTCEGC). Thr48 bears the Phosphothreonine; by PKC mark. The segment at 57–81 (CPFAGRCEVSKAQRRHCPACRLQKC) adopts an NR C4-type zinc-finger fold. The NR LBD domain occupies 119-358 (QQKELIQTLL…MMPLLGEICS (240 aa)).

It belongs to the nuclear hormone receptor family. NR1 subfamily. In terms of assembly, heterodimer of NR1I3 and RXR. Interacts with PSMC4. Interacts with ECT2. Directly interacts with DNAJC7; this complex may also include HSP90. Interacts with CRY1. Interacts with CRY2 in a ligand-dependent manner. Phosphorylated at Thr-48 by PKC, dephosphorylation of Thr-48 is required for nuclear translocation and activation.

Its subcellular location is the nucleus. The protein resides in the cytoplasm. It is found in the cytoskeleton. In terms of biological role, binds and transactivates the retinoic acid response elements that control expression of the retinoic acid receptor beta 2 and alcohol dehydrogenase 3 genes. Transactivates both the phenobarbital responsive element module of the human CYP2B6 gene and the CYP3A4 xenobiotic response element. The protein is Nuclear receptor subfamily 1 group I member 3 (Nr1i3) of Rattus norvegicus (Rat).